Here is a 457-residue protein sequence, read N- to C-terminus: Transmembrane protease serine 5 (457 aa).

Positions 1–21 are disordered; it reads MSLMLDDQPPMEAQYAEEGPG. The Cytoplasmic segment spans residues 1–49; sequence MSLMLDDQPPMEAQYAEEGPGPGIFRAEPGDQQHPISQAVCWRSMRRGC. A helical; Signal-anchor for type II membrane protein transmembrane segment spans residues 50 to 70; sequence AVLGALGLLAGAGVGSWLLVL. The Extracellular portion of the chain corresponds to 71–457; the sequence is YLCPAASQPI…IHDTAQDSLL (387 aa). The SRCR domain occupies 112 to 207; the sequence is FRINSEDFLL…SGQVVSLRCS (96 aa). Disulfide bonds link Cys135–Cys196, Cys148–Cys206, Cys209–Cys328, Cys243–Cys259, Cys342–Cys411, Cys374–Cys390, and Cys401–Cys429. Residues Asn163, Asn170, and Asn195 are each glycosylated (N-linked (GlcNAc...) asparagine). One can recognise a Peptidase S1 domain in the interval 218–453; sequence IVGGQSVAPG…FLDWIHDTAQ (236 aa). Residues His258 and Asp308 each act as charge relay system in the active site. N-linked (GlcNAc...) asparagine glycans are attached at residues Asn319 and Asn375. Ser405 serves as the catalytic Charge relay system.

It belongs to the peptidase S1 family. Brain-specific. Predominantly expressed in neurons, in their axons, and at the synapses of motoneurons in the spinal cord.

It localises to the cell membrane. In terms of biological role, may play a role in hearing. In Homo sapiens (Human), this protein is Transmembrane protease serine 5 (TMPRSS5).